Here is a 215-residue protein sequence, read N- to C-terminus: Reticulon-like protein B14 (215 aa).

Positions 31-211 (FADIMFWKNK…NKIPKAQAKT (181 aa)) constitute a Reticulon domain. The next 3 helical transmembrane spans lie at 41–61 (KESGTILGVFTLIWFLFEVVE), 62–82 (YPFITFLCQILLLFIFIFLIW), and 141–161 (LWILSVVGNYFSSLTLLYIVF).

It localises to the endoplasmic reticulum membrane. The chain is Reticulon-like protein B14 (RTNLB14) from Arabidopsis thaliana (Mouse-ear cress).